We begin with the raw amino-acid sequence, 431 residues long: 23S rRNA (uracil(1939)-C(5))-methyltransferase RlmD (431 aa).

The region spanning 8-68 (KRRVTTRQII…SKYSRGQVKR (61 aa)) is the TRAM domain. [4Fe-4S] cluster contacts are provided by Cys-81, Cys-87, Cys-90, and Cys-162. Positions 265, 294, 299, 315, 342, and 363 each coordinate S-adenosyl-L-methionine. Cys-389 functions as the Nucleophile in the catalytic mechanism.

The protein belongs to the class I-like SAM-binding methyltransferase superfamily. RNA M5U methyltransferase family. RlmD subfamily.

It carries out the reaction uridine(1939) in 23S rRNA + S-adenosyl-L-methionine = 5-methyluridine(1939) in 23S rRNA + S-adenosyl-L-homocysteine + H(+). Functionally, catalyzes the formation of 5-methyl-uridine at position 1939 (m5U1939) in 23S rRNA. The protein is 23S rRNA (uracil(1939)-C(5))-methyltransferase RlmD of Enterobacter sp. (strain 638).